Here is a 559-residue protein sequence, read N- to C-terminus: Urocanate hydratase (559 aa).

NAD(+) contacts are provided by residues 50 to 51 (GG), Gln128, 174 to 176 (GMG), Asp194, Arg199, 240 to 241 (NA), 261 to 265 (QTSAH), 271 to 272 (YI), and Tyr320. Cys408 is an active-site residue. Gly490 is a binding site for NAD(+).

The protein belongs to the urocanase family. NAD(+) serves as cofactor.

The protein localises to the cytoplasm. It catalyses the reaction 4-imidazolone-5-propanoate = trans-urocanate + H2O. It functions in the pathway amino-acid degradation; L-histidine degradation into L-glutamate; N-formimidoyl-L-glutamate from L-histidine: step 2/3. Catalyzes the conversion of urocanate to 4-imidazolone-5-propionate. The chain is Urocanate hydratase from Halalkalibacterium halodurans (strain ATCC BAA-125 / DSM 18197 / FERM 7344 / JCM 9153 / C-125) (Bacillus halodurans).